The primary structure comprises 700 residues: Beta-galactosidase Bga (700 aa).

Arginine 103 is a binding site for substrate. Position 107 (cysteine 107) interacts with Zn(2+). Asparagine 141 is a substrate binding site. Catalysis depends on glutamate 142, which acts as the Proton donor. 3 residues coordinate Zn(2+): cysteine 151, cysteine 153, and cysteine 156. The active-site Nucleophile is the glutamate 312. Residues tryptophan 320 and glutamate 360–histidine 363 each bind substrate. Acidic residues predominate over residues aspartate 648–aspartate 658. The segment at aspartate 648–alanine 674 is disordered.

It belongs to the glycosyl hydrolase 42 family.

It carries out the reaction Hydrolysis of terminal non-reducing beta-D-galactose residues in beta-D-galactosides.. Its activity is regulated as follows. Requires 4 M NaCl or KCl for maximal activity. In terms of biological role, cleaves o-nitrophenyl-beta-D-galactopyranoside (ONPG) in vitro. The protein is Beta-galactosidase Bga of Halorubrum lacusprofundi (strain ATCC 49239 / DSM 5036 / JCM 8891 / ACAM 34).